Consider the following 574-residue polypeptide: R-linalool synthase, chloroplastic (574 aa).

A chloroplast-targeting transit peptide spans Met-1–Leu-40. Positions Ile-52–Asn-61 are enriched in polar residues. A disordered region spans residues Ile-52–Ser-71. Residues Arg-287, Asp-324, Asp-328, Arg-467, and Asp-470 each contribute to the (2E)-geranyl diphosphate site. Mg(2+) is bound by residues Asp-324 and Asp-328. A DDXXD motif motif is present at residues Asp-324–Asp-328. 3 residues coordinate Mg(2+): Asp-470, Thr-474, and Glu-478.

Belongs to the terpene synthase family. Tpsb subfamily. It depends on Mg(2+) as a cofactor. Mn(2+) is required as a cofactor.

It is found in the plastid. The protein localises to the chloroplast. It catalyses the reaction (2E)-geranyl diphosphate + H2O = (R)-linalool + diphosphate. It participates in secondary metabolite biosynthesis; terpenoid biosynthesis. Functionally, monoterpene synthase that catalyzes the formation of (3R)-linalool from geranyl diphosphate. The polypeptide is R-linalool synthase, chloroplastic (LIS) (Ocimum basilicum (Sweet basil)).